A 439-amino-acid polypeptide reads, in one-letter code: GTPase Obg (439 aa).

The Obg domain maps to 1–159 (MAFVDQAQIE…RNLKLELKVL (159 aa)). The 177-residue stretch at 160 to 336 (ADVGLVGFPS…LMRLTADMLA (177 aa)) folds into the OBG-type G domain. GTP is bound by residues 166–173 (GFPSAGKS), 191–195 (FTTLS), 213–216 (DLPG), 283–286 (TKMD), and 317–319 (SSI). The Mg(2+) site is built by serine 173 and threonine 193. Residues 338–357 (APAPESYRPETKNDTSEKSY) form a disordered region. The segment covering 344 to 354 (YRPETKNDTSE) has biased composition (basic and acidic residues). Residues 358–439 (TFKPETHDFT…NSDFVFEFSE (82 aa)) form the OCT domain.

Belongs to the TRAFAC class OBG-HflX-like GTPase superfamily. OBG GTPase family. In terms of assembly, monomer. Requires Mg(2+) as cofactor.

It localises to the cytoplasm. In terms of biological role, an essential GTPase which binds GTP, GDP and possibly (p)ppGpp with moderate affinity, with high nucleotide exchange rates and a fairly low GTP hydrolysis rate. Plays a role in control of the cell cycle, stress response, ribosome biogenesis and in those bacteria that undergo differentiation, in morphogenesis control. The polypeptide is GTPase Obg (Leuconostoc mesenteroides subsp. mesenteroides (strain ATCC 8293 / DSM 20343 / BCRC 11652 / CCM 1803 / JCM 6124 / NCDO 523 / NBRC 100496 / NCIMB 8023 / NCTC 12954 / NRRL B-1118 / 37Y)).